Here is a 226-residue protein sequence, read N- to C-terminus: Probable transaldolase (226 aa).

The Schiff-base intermediate with substrate role is filled by K91.

It belongs to the transaldolase family. Type 3B subfamily.

It localises to the cytoplasm. The enzyme catalyses D-sedoheptulose 7-phosphate + D-glyceraldehyde 3-phosphate = D-erythrose 4-phosphate + beta-D-fructose 6-phosphate. The protein operates within carbohydrate degradation; pentose phosphate pathway; D-glyceraldehyde 3-phosphate and beta-D-fructose 6-phosphate from D-ribose 5-phosphate and D-xylulose 5-phosphate (non-oxidative stage): step 2/3. In terms of biological role, transaldolase is important for the balance of metabolites in the pentose-phosphate pathway. The polypeptide is Probable transaldolase (Chlorobium phaeobacteroides (strain DSM 266 / SMG 266 / 2430)).